Reading from the N-terminus, the 618-residue chain is UvrABC system protein C (618 aa).

The GIY-YIG domain occupies 13 to 92 (DKPGVYLMKN…IKKYRPKYNI (80 aa)). One can recognise a UVR domain in the interval 204 to 239 (LDIVENFKLNMEKAAENLEFEKAAMLRDKINIIEKI).

It belongs to the UvrC family. In terms of assembly, interacts with UvrB in an incision complex.

It localises to the cytoplasm. The UvrABC repair system catalyzes the recognition and processing of DNA lesions. UvrC both incises the 5' and 3' sides of the lesion. The N-terminal half is responsible for the 3' incision and the C-terminal half is responsible for the 5' incision. This is UvrABC system protein C from Clostridium botulinum (strain ATCC 19397 / Type A).